Here is a 205-residue protein sequence, read N- to C-terminus: MTSTNGPLRVGIGGPVGSGKTALMEQLCKRFRDRYEICAITNDIYTKEDARILTVAGALPEERILGVETGGCPHTAIREDASINLAAVAEMSRRFPKLDLVLIESGGDNLAATFSPELADITLYVIDVAGGEKIPRKGGPGITRSDLLIVNKTDLAPLVGADLSVMESDTQRMRGTRPYVFASLREGTGADAVARFVEEAGGLGR.

14-21 (GPVGSGKT) serves as a coordination point for GTP.

This sequence belongs to the SIMIBI class G3E GTPase family. UreG subfamily. As to quaternary structure, homodimer. UreD, UreF and UreG form a complex that acts as a GTP-hydrolysis-dependent molecular chaperone, activating the urease apoprotein by helping to assemble the nickel containing metallocenter of UreC. The UreE protein probably delivers the nickel.

It is found in the cytoplasm. Its function is as follows. Facilitates the functional incorporation of the urease nickel metallocenter. This process requires GTP hydrolysis, probably effectuated by UreG. The sequence is that of Urease accessory protein UreG 1 from Methylobacterium radiotolerans (strain ATCC 27329 / DSM 1819 / JCM 2831 / NBRC 15690 / NCIMB 10815 / 0-1).